The sequence spans 356 residues: MNKKILISTGGSGGHVIPATIIYKHLEDNFDVSMTSDFRGVKFLNKDEYNLKIFNVRPISKNLLIIPLDFIFMIFLIFKSISFFRKNKIDTLISTGGYMSLPLCLGARILNIKLLLFEPNMVLGRSNKFFLSYCQKIFCYSNNIKKFPIKFKNKIKVIPALLRKNFYNKRDYNKSLDTINLLIIGGSQGAKIFDDLVKNAIIELAKNYKLKIYQQTNSINFESFKKIYEDKNIQCELFNFNDDVVNFMQKTDLCITRAGASTLAELNFTETPYLAIPLPTAKDNHQFENAHFYNKLGFNWLLNQKEIDEKTLLNKLINIIDNKEEYLVKKKNMKDFNYENTWNNINLKIISVINEN.

UDP-N-acetyl-alpha-D-glucosamine-binding positions include 12–14 (SGG), N120, R163, S187, and Q286.

This sequence belongs to the glycosyltransferase 28 family. MurG subfamily.

The protein resides in the cell inner membrane. It carries out the reaction di-trans,octa-cis-undecaprenyl diphospho-N-acetyl-alpha-D-muramoyl-L-alanyl-D-glutamyl-meso-2,6-diaminopimeloyl-D-alanyl-D-alanine + UDP-N-acetyl-alpha-D-glucosamine = di-trans,octa-cis-undecaprenyl diphospho-[N-acetyl-alpha-D-glucosaminyl-(1-&gt;4)]-N-acetyl-alpha-D-muramoyl-L-alanyl-D-glutamyl-meso-2,6-diaminopimeloyl-D-alanyl-D-alanine + UDP + H(+). The protein operates within cell wall biogenesis; peptidoglycan biosynthesis. In terms of biological role, cell wall formation. Catalyzes the transfer of a GlcNAc subunit on undecaprenyl-pyrophosphoryl-MurNAc-pentapeptide (lipid intermediate I) to form undecaprenyl-pyrophosphoryl-MurNAc-(pentapeptide)GlcNAc (lipid intermediate II). This is UDP-N-acetylglucosamine--N-acetylmuramyl-(pentapeptide) pyrophosphoryl-undecaprenol N-acetylglucosamine transferase from Pelagibacter ubique (strain HTCC1062).